Consider the following 545-residue polypeptide: Esterase-5C (545 aa).

Residues 1-19 form the signal peptide; the sequence is MLAARLIILLSFYWLSASA. The cysteines at positions 84 and 103 are disulfide-linked. N113 carries N-linked (GlcNAc...) asparagine glycosylation. S207 (acyl-ester intermediate) is an active-site residue. C259 and C271 are oxidised to a cystine. The N-linked (GlcNAc...) asparagine glycan is linked to N421. H467 serves as the catalytic Charge relay system. N-linked (GlcNAc...) asparagine glycosylation is present at N507. A disulfide bond links C515 and C536.

This sequence belongs to the type-B carboxylesterase/lipase family.

The protein localises to the secreted. It catalyses the reaction a carboxylic ester + H2O = an alcohol + a carboxylate + H(+). This chain is Esterase-5C (Est-5C), found in Drosophila miranda (Fruit fly).